The primary structure comprises 185 residues: Photosystem I assembly protein Ycf4 (185 aa).

2 consecutive transmembrane segments (helical) span residues 24-44 and 66-86; these read YIIG…SISS and IIMG…WYLV.

Belongs to the Ycf4 family.

It is found in the cellular thylakoid membrane. Its function is as follows. Seems to be required for the assembly of the photosystem I complex. The chain is Photosystem I assembly protein Ycf4 from Prochlorococcus marinus (strain MIT 9301).